Reading from the N-terminus, the 548-residue chain is Putative malate oxidoreductase [NAD] (548 aa).

Tyr-96 serves as the catalytic Proton donor. Lys-169 serves as the catalytic Proton acceptor. The a divalent metal cation site is built by Glu-240, Asp-241, and Asp-264. NAD(+)-binding positions include 297-300 (AGTA), Asn-410, and Asn-455.

Belongs to the malic enzymes family. Mg(2+) serves as cofactor. The cofactor is Mn(2+).

The catalysed reaction is (S)-malate + NAD(+) = pyruvate + CO2 + NADH. The enzyme catalyses oxaloacetate + H(+) = pyruvate + CO2. The polypeptide is Putative malate oxidoreductase [NAD] (mez) (Mycobacterium tuberculosis (strain CDC 1551 / Oshkosh)).